The following is a 345-amino-acid chain: Opioid-binding protein/cell adhesion molecule (345 aa).

Positions 1 to 27 (MGVCGYLFLPWKCLVVVSLRLLFLVPT) are cleaved as a signal peptide. Ig-like C2-type domains are found at residues 39-126 (PKAM…PKTS), 136-219 (PQIM…VKIT), and 223-310 (PPYI…ASIT). N-linked (GlcNAc...) asparagine glycosylation is found at asparagine 44, asparagine 70, and asparagine 140. Cysteine 57 and cysteine 115 are oxidised to a cystine. 2 cysteine pairs are disulfide-bonded: cysteine 157–cysteine 202 and cysteine 244–cysteine 296. Asparagine 285, asparagine 293, and asparagine 306 each carry an N-linked (GlcNAc...) asparagine glycan. Asparagine 322 carries GPI-anchor amidated asparagine lipidation. Positions 323–345 (SASRALACLWLSGTFFAHFFIKF) are cleaved as a propeptide — removed in mature form.

The protein belongs to the immunoglobulin superfamily. IgLON family.

It is found in the cell membrane. Binds opioids in the presence of acidic lipids; probably involved in cell contact. In Rattus norvegicus (Rat), this protein is Opioid-binding protein/cell adhesion molecule (Opcml).